We begin with the raw amino-acid sequence, 595 residues long: Miltiradiene synthase KSL1, chloroplastic (595 aa).

A chloroplast-targeting transit peptide spans 1-47 (MSLAFNPAATAFSGNGARSRRENFPVKHVTVRGFPMITNKSSFAVKC). Mg(2+)-binding residues include aspartate 334, aspartate 338, asparagine 478, and glutamate 486. A DDXXD motif motif is present at residues 334–338 (DDFFD).

It belongs to the terpene synthase family. The cofactor is Mg(2+).

It localises to the plastid. The protein resides in the chloroplast. It catalyses the reaction (+)-copalyl diphosphate = miltiradiene + diphosphate. The protein operates within secondary metabolite biosynthesis; terpenoid biosynthesis. Its function is as follows. Involved in tanshinone biosynthesis in hairy roots. Catalyzes the conversion of copalyl diphosphate (CPP) to miltiradiene. The chain is Miltiradiene synthase KSL1, chloroplastic from Salvia miltiorrhiza (Chinese sage).